The sequence spans 158 residues: Snaclec mucrocetin subunit alpha (158 aa).

The signal sequence occupies residues 1–23 (MGRFIFVSFGLLVVFLSLSGTGA). 3 disulfides stabilise this stretch: Cys27-Cys38, Cys55-Cys152, and Cys127-Cys144. A C-type lectin domain is found at 34–153 (YDRYCYQAFS…CGRENPFVCK (120 aa)).

It belongs to the snaclec family. Tetramer of heterodimers of alpha and beta subunits (alphabeta)(4); disulfide-linked. Expressed by the venom gland.

The protein localises to the secreted. In terms of biological role, platelet-agglutinating factor that acts in a vWF-independent manner. Binds specifically to platelet GPIbalpha (GP1BA) to a distinct binding site from that of flavocetin-A. In Protobothrops mucrosquamatus (Taiwan habu), this protein is Snaclec mucrocetin subunit alpha.